Here is a 433-residue protein sequence, read N- to C-terminus: ATP-dependent protease ATPase subunit HslU (433 aa).

Residues Val-18, 60–65, Asp-246, Glu-311, and Arg-383 contribute to the ATP site; that span reads GVGKTE.

Belongs to the ClpX chaperone family. HslU subfamily. A double ring-shaped homohexamer of HslV is capped on each side by a ring-shaped HslU homohexamer. The assembly of the HslU/HslV complex is dependent on binding of ATP.

The protein resides in the cytoplasm. ATPase subunit of a proteasome-like degradation complex; this subunit has chaperone activity. The binding of ATP and its subsequent hydrolysis by HslU are essential for unfolding of protein substrates subsequently hydrolyzed by HslV. HslU recognizes the N-terminal part of its protein substrates and unfolds these before they are guided to HslV for hydrolysis. This Nitrobacter winogradskyi (strain ATCC 25391 / DSM 10237 / CIP 104748 / NCIMB 11846 / Nb-255) protein is ATP-dependent protease ATPase subunit HslU.